A 153-amino-acid polypeptide reads, in one-letter code: NAD(P)H-quinone oxidoreductase subunit N (153 aa).

This sequence belongs to the complex I NdhN subunit family. In terms of assembly, NDH-1 can be composed of about 15 different subunits; different subcomplexes with different compositions have been identified which probably have different functions.

Its subcellular location is the cellular thylakoid membrane. The enzyme catalyses a plastoquinone + NADH + (n+1) H(+)(in) = a plastoquinol + NAD(+) + n H(+)(out). It carries out the reaction a plastoquinone + NADPH + (n+1) H(+)(in) = a plastoquinol + NADP(+) + n H(+)(out). Its function is as follows. NDH-1 shuttles electrons from an unknown electron donor, via FMN and iron-sulfur (Fe-S) centers, to quinones in the respiratory and/or the photosynthetic chain. The immediate electron acceptor for the enzyme in this species is believed to be plastoquinone. Couples the redox reaction to proton translocation, and thus conserves the redox energy in a proton gradient. Cyanobacterial NDH-1 also plays a role in inorganic carbon-concentration. The sequence is that of NAD(P)H-quinone oxidoreductase subunit N from Prochlorococcus marinus (strain MIT 9303).